Reading from the N-terminus, the 233-residue chain is Protein Mis18-alpha (233 aa).

Phosphoserine occurs at positions 36, 39, and 40. In terms of domain architecture, Mis18 spans 80–178; it reads PLVFLCSGCR…NVEAVESYVL (99 aa). Residues cysteine 85, cysteine 88, cysteine 141, and cysteine 144 each contribute to the Zn(2+) site. Residue lysine 162 forms a Glycyl lysine isopeptide (Lys-Gly) (interchain with G-Cter in SUMO2) linkage. Position 233 is a phosphoserine (serine 233).

It belongs to the mis18 family. In terms of assembly, homodimer, and heterodimer with OIP5/MIS18B. Identified in a complex containing MIS18A, OIP5/MIS18B, MIS18BP1, RBBP7 and RBBP4.

It is found in the nucleus. The protein resides in the chromosome. It localises to the centromere. Functionally, required for recruitment of CENPA to centromeres and normal chromosome segregation during mitosis. The sequence is that of Protein Mis18-alpha (MIS18A) from Plecturocebus moloch (Dusky titi monkey).